The following is a 394-amino-acid chain: 12-oxophytodienoate reductase 7 (394 aa).

FMN-binding positions include 35–37 (PMT) and Q110. 189–192 (HGAH) contacts substrate. Y194 serves as the catalytic Proton donor. Residue R241 coordinates FMN. R286 is a substrate binding site. Residues G324 and 345–346 (GR) contribute to the FMN site. Positions 392-394 (SRM) match the Microbody targeting signal motif.

This sequence belongs to the NADH:flavin oxidoreductase/NADH oxidase family. Requires FMN as cofactor.

It localises to the peroxisome. It catalyses the reaction (1S,2S)-OPC-8 + NADP(+) = (9S,13S,15Z)-12-oxophyto-10,15-dienoate + NADPH + H(+). It functions in the pathway lipid metabolism; oxylipin biosynthesis. Involved in the biosynthesis of jasmonate (JA) and perhaps in biosynthesis or metabolism of other oxylipin signaling moleclules. In vitro, reduces cis(+)-12-oxophytodienoic acid (cis(+)-OPDA) and cis(-)-OPDA to cis(+)-OPC-8:0 and cis(-)-OPC-8:0, respectively. May be required for the spatial and temporal regulation of JA levels during dehiscence of anthers, promoting the stomium degeneration program. Involved in carbohydrate transport underlying normal lodicule function during anthesis. The chain is 12-oxophytodienoate reductase 7 from Oryza sativa subsp. japonica (Rice).